Reading from the N-terminus, the 606-residue chain is EPM2A-interacting protein 1 (606 aa).

S147 carries the post-translational modification Phosphoserine.

Interacts with EPM2A.

The protein localises to the endoplasmic reticulum. In Mus musculus (Mouse), this protein is EPM2A-interacting protein 1 (Epm2aip1).